A 310-amino-acid polypeptide reads, in one-letter code: Putative S-adenosyl-L-methionine-dependent methyltransferase Mvan_1346 (310 aa).

S-adenosyl-L-methionine contacts are provided by residues D136 and 165–166; that span reads DL.

The protein belongs to the UPF0677 family.

Functionally, exhibits S-adenosyl-L-methionine-dependent methyltransferase activity. This chain is Putative S-adenosyl-L-methionine-dependent methyltransferase Mvan_1346, found in Mycolicibacterium vanbaalenii (strain DSM 7251 / JCM 13017 / BCRC 16820 / KCTC 9966 / NRRL B-24157 / PYR-1) (Mycobacterium vanbaalenii).